The primary structure comprises 206 residues: Small ribosomal subunit protein uS4 (206 aa).

Positions Asn18–Ser46 are disordered. The region spanning Arg94–Ala156 is the S4 RNA-binding domain.

Belongs to the universal ribosomal protein uS4 family. In terms of assembly, part of the 30S ribosomal subunit. Contacts protein S5. The interaction surface between S4 and S5 is involved in control of translational fidelity.

Functionally, one of the primary rRNA binding proteins, it binds directly to 16S rRNA where it nucleates assembly of the body of the 30S subunit. In terms of biological role, with S5 and S12 plays an important role in translational accuracy. The protein is Small ribosomal subunit protein uS4 of Ruegeria sp. (strain TM1040) (Silicibacter sp.).